Reading from the N-terminus, the 100-residue chain is NADH-quinone oxidoreductase subunit K (100 aa).

3 helical membrane passes run 4–24, 28–48, and 60–80; these read LQHGLILAAILFVLGLTGLLI, LLFMLISLEVMINAAALAFVV, and VMYILAITLAAAEASIGLALL.

The protein belongs to the complex I subunit 4L family. As to quaternary structure, NDH-1 is composed of 13 different subunits. Subunits NuoA, H, J, K, L, M, N constitute the membrane sector of the complex.

It localises to the cell inner membrane. It catalyses the reaction a quinone + NADH + 5 H(+)(in) = a quinol + NAD(+) + 4 H(+)(out). In terms of biological role, NDH-1 shuttles electrons from NADH, via FMN and iron-sulfur (Fe-S) centers, to quinones in the respiratory chain. The immediate electron acceptor for the enzyme in this species is believed to be ubiquinone. Couples the redox reaction to proton translocation (for every two electrons transferred, four hydrogen ions are translocated across the cytoplasmic membrane), and thus conserves the redox energy in a proton gradient. This is NADH-quinone oxidoreductase subunit K from Yersinia pseudotuberculosis serotype O:1b (strain IP 31758).